We begin with the raw amino-acid sequence, 1080 residues long: Protein transport protein SEC24 C (1080 aa).

Residues 1 to 10 are compositionally biased toward pro residues; it reads MVAPVPPGAP. Disordered stretches follow at residues 1–189, 201–220, and 316–367; these read MVAP…SGMI, GSGGFPRGTQFPGAAVTTPQ, and TAMG…SDYV. A compositionally biased stretch (polar residues) spans 12–43; sequence PNSQQNSGPPNFYPGSQGNSNALADNMQNLSL. Over residues 45–70 the composition is skewed to pro residues; the sequence is RPPPMMPGSGPRPPPPFGQSPQPFPQ. Low complexity-rich tracts occupy residues 71-84, 142-160, and 178-189; these read QSPSYGAPQRGPSP, PAASSSGFPAFGPSGSVAA, and GSGMSMPPSGMI. Residues 340 to 356 show a composition bias toward polar residues; that stretch reads GSSSSPTVFETRQSNQA. The Zn(2+) site is built by cysteine 430, cysteine 433, cysteine 452, and cysteine 455. Residues 430–455 are zinc finger-like; it reads CSRCKGYINPFMKFIDQGRKFICNFC.

It belongs to the SEC23/SEC24 family. SEC24 subfamily. In terms of assembly, component of the coat protein complex II (COPII), composed of at least five proteins: the Sec23/24 complex, the Sec13/31 complex and Sar1. Mainly expressed at low levels in pollen, leaves, roots and stems.

The protein resides in the cytoplasmic vesicle. It is found in the COPII-coated vesicle membrane. It localises to the endoplasmic reticulum membrane. The protein localises to the golgi apparatus membrane. Component of the coat protein complex II (COPII), that covers ER-derived vesicles involved in transport from the endoplasmic reticulum to the Golgi apparatus. COPII is composed of at least five proteins: the SEC23/24 complex, the SEC13/31 complex, and the protein SAR1. Acts in the cytoplasm to promote the transport of secretory, plasma membrane, and vacuolar proteins from the endoplasmic reticulum to the Golgi complex. The chain is Protein transport protein SEC24 C from Arabidopsis thaliana (Mouse-ear cress).